A 147-amino-acid chain; its full sequence is Hemoglobin subunit beta-H0 (147 aa).

The Globin domain occupies 3-147 (HFTAEEKAAI…VATALSHKYH (145 aa)). Residues histidine 64 and histidine 93 each contribute to the heme b site.

It belongs to the globin family. Heterotetramer of two alpha chains and two beta chains. As to expression, red blood cells.

This is a minor early embryonic beta chain. This Mus musculus (Mouse) protein is Hemoglobin subunit beta-H0 (Hbb-bh0).